We begin with the raw amino-acid sequence, 454 residues long: CCA-adding enzyme (454 aa).

The ATP site is built by S59 and R62. Positions 59 and 62 each coordinate CTP. Positions 71, 73, and 125 each coordinate Mg(2+). H148, K167, and Y176 together coordinate ATP. H148, K167, and Y176 together coordinate CTP.

Belongs to the tRNA nucleotidyltransferase/poly(A) polymerase family. Archaeal CCA-adding enzyme subfamily. In terms of assembly, homodimer. It depends on Mg(2+) as a cofactor.

The enzyme catalyses a tRNA precursor + 2 CTP + ATP = a tRNA with a 3' CCA end + 3 diphosphate. The catalysed reaction is a tRNA with a 3' CCA end + 2 CTP + ATP = a tRNA with a 3' CCACCA end + 3 diphosphate. Functionally, catalyzes the addition and repair of the essential 3'-terminal CCA sequence in tRNAs without using a nucleic acid template. Adds these three nucleotides in the order of C, C, and A to the tRNA nucleotide-73, using CTP and ATP as substrates and producing inorganic pyrophosphate. tRNA 3'-terminal CCA addition is required both for tRNA processing and repair. Also involved in tRNA surveillance by mediating tandem CCA addition to generate a CCACCA at the 3' terminus of unstable tRNAs. While stable tRNAs receive only 3'-terminal CCA, unstable tRNAs are marked with CCACCA and rapidly degraded. This chain is CCA-adding enzyme, found in Methanosarcina mazei (strain ATCC BAA-159 / DSM 3647 / Goe1 / Go1 / JCM 11833 / OCM 88) (Methanosarcina frisia).